A 670-amino-acid polypeptide reads, in one-letter code: Sodium, potassium, lithium and rubidium/H(+) antiporter (670 aa).

A run of 11 helical transmembrane segments spans residues 5 to 27, 46 to 66, 83 to 103, 105 to 125, 156 to 176, 182 to 202, 228 to 248, 276 to 296, 314 to 334, 355 to 375, and 389 to 409; these read LVVLVLLTIIAISNIVNRFIPFI, GLHFELNTELFFVLFIAPLLF, PILLLALGLVFATVIVGGYTI, WMIPAIPLAAAFGLAAILSPT, ASGLVAFKFAIAAAVTGAFSL, SFVFISLGGLLCGVVISFLII, FVIYLAAEEIGVSGILAVVAG, IILFILNGLVFVILGTQIPDV, YILVITFTLMLLRFLWVLFFW, LLISISGVRGAVTLAGSFSIP, and LILFLAAGVILCTLVIATVVL.

It belongs to the monovalent cation:proton antiporter 1 (CPA1) transporter (TC 2.A.36) family. Nhak (TC 2.A.36.3.2) subfamily.

It localises to the cell membrane. Functionally, transporter involved in the efflux of sodium, potassium, lithium and rubidium. In Bacillus subtilis (strain 168), this protein is Sodium, potassium, lithium and rubidium/H(+) antiporter (nhaK).